The following is a 193-amino-acid chain: Xanthine phosphoribosyltransferase (193 aa).

Positions 20 and 27 each coordinate xanthine. 128 to 132 (ANGQA) is a 5-phospho-alpha-D-ribose 1-diphosphate binding site. Residue Lys156 coordinates xanthine.

The protein belongs to the purine/pyrimidine phosphoribosyltransferase family. Xpt subfamily. In terms of assembly, homodimer.

The protein resides in the cytoplasm. It catalyses the reaction XMP + diphosphate = xanthine + 5-phospho-alpha-D-ribose 1-diphosphate. It participates in purine metabolism; XMP biosynthesis via salvage pathway; XMP from xanthine: step 1/1. Its function is as follows. Converts the preformed base xanthine, a product of nucleic acid breakdown, to xanthosine 5'-monophosphate (XMP), so it can be reused for RNA or DNA synthesis. The chain is Xanthine phosphoribosyltransferase from Streptococcus equi subsp. equi (strain 4047).